The following is a 254-amino-acid chain: Geranylgeranylglyceryl phosphate synthase (254 aa).

Mg(2+)-binding residues include Asp-28 and Ser-53. Sn-glycerol 1-phosphate contacts are provided by residues 172-178, 203-204, and 225-226; these read YLEAGSG, GG, and GT.

It belongs to the GGGP/HepGP synthase family. Group II subfamily. Mg(2+) is required as a cofactor.

The protein localises to the cytoplasm. It catalyses the reaction sn-glycerol 1-phosphate + (2E,6E,10E)-geranylgeranyl diphosphate = sn-3-O-(geranylgeranyl)glycerol 1-phosphate + diphosphate. It functions in the pathway membrane lipid metabolism; glycerophospholipid metabolism. In terms of biological role, prenyltransferase that catalyzes the transfer of the geranylgeranyl moiety of geranylgeranyl diphosphate (GGPP) to the C3 hydroxyl of sn-glycerol-1-phosphate (G1P). This reaction is the first ether-bond-formation step in the biosynthesis of archaeal membrane lipids. In Methanococcus vannielii (strain ATCC 35089 / DSM 1224 / JCM 13029 / OCM 148 / SB), this protein is Geranylgeranylglyceryl phosphate synthase.